Consider the following 240-residue polypeptide: 26.7 kDa heat shock protein, chloroplastic (240 aa).

The transit peptide at 1–43 (MAAPFALVSRVSPAARLPIRAAWRRARPTVGLPSSGRARQLAV) directs the protein to the chloroplast. Residues 59–84 (HVNQDGGNQQGNAVQRRPRRSSALDG) are disordered. The 115-residue stretch at 126 to 240 (LATGEVRMPW…ERKVIDVQVQ (115 aa)) folds into the sHSP domain.

The protein belongs to the small heat shock protein (HSP20) family. As to quaternary structure, may form oligomeric structures. As to expression, expressed in roots, stems, leaves, spikelets and embryos.

The protein resides in the plastid. The protein localises to the chloroplast. The polypeptide is 26.7 kDa heat shock protein, chloroplastic (HSP26.7) (Oryza sativa subsp. japonica (Rice)).